The primary structure comprises 331 residues: MIFQSSSRLYAAVSSLLWPAILCAGLTGAYFAFRSDMHLLWFNVVYLSTVAIIALFERLMPYEKTWQKRDGETFNDIAHTLLTKGGVQIAAAIGTSFPMAVATVAQPALSYHSHFWPDQWPMAFQVVLGLVIAEFGLYMAHRLAHEHLSLWRFHALHHSVGRLWVINTGRFHFIDTLFKIALGQIPLYLLGAPLPVFLWIGAVTAFIGLLTHCNVDMRTGPLDLIFSTPRLHRWHHSKVLAEGNTNYGENLVIWDQLLGTFHNPPRPSSTDIGITGKVAKGFLAQLAQPFSRKGRKEIIGKKPKELILQEEQAAKAAAARRNANAKIRKSG.

Helical transmembrane passes span 13–33, 37–57, 85–105, 120–140, and 189–209; these read VSSLLWPAILCAGLTGAYFAF, MHLLWFNVVYLSTVAIIALFE, GGVQIAAAIGTSFPMAVATVA, WPMAFQVVLGLVIAEFGLYMA, and LLGAPLPVFLWIGAVTAFIGL. The Fatty acid hydroxylase domain maps to 126-260; that stretch reads VVLGLVIAEF…LVIWDQLLGT (135 aa).

It belongs to the sterol desaturase family.

It is found in the cell inner membrane. It participates in lipid metabolism. In terms of biological role, involved in the biosynthesis of ornithine lipids (OLs), which are phosphorus-free membrane lipids. Is responsible for the hydroxylation of OL within the ornithine moiety. The polypeptide is Ornithine lipid hydroxylase OlsE (Rhizobium tropici).